Here is a 569-residue protein sequence, read N- to C-terminus: MTSQDSLTSIGAARIAVTALLDGGVRHVVVAPGSRSAPMAYALAEAEAAGRVRLHVRIDERDAGFTALGLALSTEAPVAVVTTSGTAVGNLLPAVMEANHSAVPVVVISADRPEELHGTGANQTTIQLDLFGDHVRFAVDVPAGDHPQKAVATALYAATGALEDTPPGPVQVNLAFRDPLVPADGDALPAAAGHGVFHYDAGPQALNLPAASGELAERRTVVLAGHDAGPVAEAFARAHGLPLLAEPSSNARFGRNAVGPYRVLLAHFGPDSPTPIERVVLFGRATLSRPVASLLARESVVSAIYQPVPVAWYEEGRRRETPIETLPELADFAGRGSAEWLDSWLLAGAAAQHGLDGVLAGEDLANGPSVGATVWEHSRGQLVLGSSNGIRDVDLAGQPHPEPIATVYANRGLAGIDGTIATATGIALGSGRETTVLLGDVTFLHDAGGLLLGHGEPVPDLRIVVLNDSGGAIFSLLEHGAVEDSGAYGTAVERLFGTPHSVGIGALAAAYGVGHQTVSTTAELAAALKSPLKGRTIVEVRVDRSGLRALHARIKEAVSAAVGQVLTAG.

The protein belongs to the TPP enzyme family. MenD subfamily. As to quaternary structure, homodimer. The cofactor is Mg(2+). Mn(2+) serves as cofactor. It depends on thiamine diphosphate as a cofactor.

The catalysed reaction is isochorismate + 2-oxoglutarate + H(+) = 5-enolpyruvoyl-6-hydroxy-2-succinyl-cyclohex-3-ene-1-carboxylate + CO2. It participates in quinol/quinone metabolism; 1,4-dihydroxy-2-naphthoate biosynthesis; 1,4-dihydroxy-2-naphthoate from chorismate: step 2/7. The protein operates within quinol/quinone metabolism; menaquinone biosynthesis. In terms of biological role, catalyzes the thiamine diphosphate-dependent decarboxylation of 2-oxoglutarate and the subsequent addition of the resulting succinic semialdehyde-thiamine pyrophosphate anion to isochorismate to yield 2-succinyl-5-enolpyruvyl-6-hydroxy-3-cyclohexene-1-carboxylate (SEPHCHC). The protein is 2-succinyl-5-enolpyruvyl-6-hydroxy-3-cyclohexene-1-carboxylate synthase of Paenarthrobacter aurescens (strain TC1).